The sequence spans 1447 residues: Bud site selection protein 4 (1447 aa).

The segment covering 1 to 16 (MHDAESTVDSLLKEID) has biased composition (basic and acidic residues). Disordered regions lie at residues 1–38 (MHDAESTVDSLLKEIDNEMEQTKSNITQNGSEDTPHNW) and 57–76 (NTRSNATENSRGRSPSKMST). At Ser10 the chain carries Phosphoserine. 2 stretches are compositionally biased toward polar residues: residues 22-32 (TKSNITQNGSE) and 59-76 (RSNATENSRGRSPSKMST). Ser78, Ser81, Ser91, Ser96, and Ser167 each carry phosphoserine. The segment at 272 to 316 (NLPSKLLNTSNNSHSDSRSPTASVEDLNISTNLPGADSSQNNPVT) is disordered. The span at 277-316 (LLNTSNNSHSDSRSPTASVEDLNISTNLPGADSSQNNPVT) shows a compositional bias: polar residues. Thr365 carries the post-translational modification Phosphothreonine. Residue Ser367 is modified to Phosphoserine. Residues 444–479 (HQESEHANEQPAIIPQKDSSEETFTELNNESEFQRN) form a disordered region. At Ser511 the chain carries Phosphoserine. The disordered stretch occupies residues 529-591 (KTSAEEHDLS…NEEPEHVPLL (63 aa)). Residues 538–548 (SSSCEDQSVSE) show a composition bias toward polar residues. Residues 549–580 (ARNKDRIEEKEVETKDENIETEKDESEYHKVE) show a composition bias toward basic and acidic residues. Phosphoserine is present on Ser616. Polar residues predominate over residues 648 to 664 (ANSQFSQQSSITTASTV). Positions 648–673 (ANSQFSQQSSITTASTVDSKKDNGST) are disordered. The tract at residues 768–879 (EHENIPLSTH…SLWESSYELK (112 aa)) is interaction with IQG1. Residues Ser805 and Ser811 each carry the phosphoserine modification. Residues 1302 to 1413 (NIYKEGYLLQ…WYNKLQEVVE (112 aa)) enclose the PH domain.

As to quaternary structure, interacts with AXL1, AXL2, IQG1 and SEC3. Phosphorylated by CDC28.

The protein localises to the bud neck. Its function is as follows. Required for establishment of the axial budding pattern in haploid cells. Cooperates with other bud site selection proteins to recognize a spatial landmark during mitosis and they subsequently become a landmark for downstream polarity establishment factors that coordinate axial budding and cytokinesis. Involved in the septin organization at the bud neck. The sequence is that of Bud site selection protein 4 (BUD4) from Saccharomyces cerevisiae (strain ATCC 204508 / S288c) (Baker's yeast).